Consider the following 821-residue polypeptide: DNA ligase (821 aa).

NAD(+)-binding positions include 33 to 37 (DVDYD), 82 to 83 (SL), and glutamate 113. The active-site N6-AMP-lysine intermediate is lysine 115. Residues arginine 136, glutamate 173, lysine 290, and lysine 314 each contribute to the NAD(+) site. Residues cysteine 408, cysteine 411, cysteine 426, and cysteine 432 each contribute to the Zn(2+) site. The BRCT domain maps to 741 to 821 (IVAGPLDGQT…RLLAYLAEHE (81 aa)).

The protein belongs to the NAD-dependent DNA ligase family. LigA subfamily. Mg(2+) serves as cofactor. It depends on Mn(2+) as a cofactor.

It catalyses the reaction NAD(+) + (deoxyribonucleotide)n-3'-hydroxyl + 5'-phospho-(deoxyribonucleotide)m = (deoxyribonucleotide)n+m + AMP + beta-nicotinamide D-nucleotide.. Functionally, DNA ligase that catalyzes the formation of phosphodiester linkages between 5'-phosphoryl and 3'-hydroxyl groups in double-stranded DNA using NAD as a coenzyme and as the energy source for the reaction. It is essential for DNA replication and repair of damaged DNA. This chain is DNA ligase, found in Stenotrophomonas maltophilia (strain R551-3).